Reading from the N-terminus, the 307-residue chain is tRNA dimethylallyltransferase (307 aa).

Position 10–17 (10–17) interacts with ATP; the sequence is GPTAVGKT. 12–17 contributes to the substrate binding site; that stretch reads TAVGKT. The segment at 35-38 is interaction with substrate tRNA; it reads DSMQ.

It belongs to the IPP transferase family. As to quaternary structure, monomer. The cofactor is Mg(2+).

It catalyses the reaction adenosine(37) in tRNA + dimethylallyl diphosphate = N(6)-dimethylallyladenosine(37) in tRNA + diphosphate. Its function is as follows. Catalyzes the transfer of a dimethylallyl group onto the adenine at position 37 in tRNAs that read codons beginning with uridine, leading to the formation of N6-(dimethylallyl)adenosine (i(6)A). The chain is tRNA dimethylallyltransferase from Ligilactobacillus salivarius (strain UCC118) (Lactobacillus salivarius).